A 315-amino-acid chain; its full sequence is Ribose-phosphate pyrophosphokinase (315 aa).

ATP-binding positions include Asp-37–Glu-39 and Arg-96–Gln-97. Positions 131 and 170 each coordinate Mg(2+). Lys-194 is an active-site residue. D-ribose 5-phosphate contacts are provided by residues Arg-196, Asp-220, and Asp-224 to Thr-228.

The protein belongs to the ribose-phosphate pyrophosphokinase family. Class I subfamily. As to quaternary structure, homohexamer. It depends on Mg(2+) as a cofactor.

The protein resides in the cytoplasm. The enzyme catalyses D-ribose 5-phosphate + ATP = 5-phospho-alpha-D-ribose 1-diphosphate + AMP + H(+). The protein operates within metabolic intermediate biosynthesis; 5-phospho-alpha-D-ribose 1-diphosphate biosynthesis; 5-phospho-alpha-D-ribose 1-diphosphate from D-ribose 5-phosphate (route I): step 1/1. Its function is as follows. Involved in the biosynthesis of the central metabolite phospho-alpha-D-ribosyl-1-pyrophosphate (PRPP) via the transfer of pyrophosphoryl group from ATP to 1-hydroxyl of ribose-5-phosphate (Rib-5-P). In Marinomonas sp. (strain MWYL1), this protein is Ribose-phosphate pyrophosphokinase.